The sequence spans 261 residues: Hydroxyethylthiazole kinase (261 aa).

Residue methionine 38 participates in substrate binding. ATP contacts are provided by arginine 114 and threonine 159. Position 186 (glycine 186) interacts with substrate.

The protein belongs to the Thz kinase family. Mg(2+) is required as a cofactor.

The catalysed reaction is 5-(2-hydroxyethyl)-4-methylthiazole + ATP = 4-methyl-5-(2-phosphooxyethyl)-thiazole + ADP + H(+). The protein operates within cofactor biosynthesis; thiamine diphosphate biosynthesis; 4-methyl-5-(2-phosphoethyl)-thiazole from 5-(2-hydroxyethyl)-4-methylthiazole: step 1/1. Its function is as follows. Catalyzes the phosphorylation of the hydroxyl group of 4-methyl-5-beta-hydroxyethylthiazole (THZ). The chain is Hydroxyethylthiazole kinase from Halalkalibacterium halodurans (strain ATCC BAA-125 / DSM 18197 / FERM 7344 / JCM 9153 / C-125) (Bacillus halodurans).